The chain runs to 331 residues: MSEIQSLTERALADVAAAQTPDQLEALRVALLGKSGSITAQLKQLGTLPAEQRKAAGEAINLSRDALTAALSERKHTLETAALDARLAGERIDVTLPGRRSERGGLHPVTRTLERIVEIFARLGYELSDGPEIEDDWHNFEALNFPPHHPARAMHDTFYFGDGRLLRTHTSGVQVRYMDAHKPPLRMIAAGKVYRSDSDQTHSPMFHQVEGLLVDEHSNFADLKGTLSEFVRAFFERDFEMRFRPSYFPFVEPGAEVDIAWQQPDGSTRWLEVLGCGMVHPNVLRSVGIDPERYTGFAFGLGVERFAMLRYGVNDLRAFFENDVRFLRQFA.

A Mg(2+)-binding site is contributed by Glu-252.

This sequence belongs to the class-II aminoacyl-tRNA synthetase family. Phe-tRNA synthetase alpha subunit type 1 subfamily. In terms of assembly, tetramer of two alpha and two beta subunits. Requires Mg(2+) as cofactor.

The protein resides in the cytoplasm. The enzyme catalyses tRNA(Phe) + L-phenylalanine + ATP = L-phenylalanyl-tRNA(Phe) + AMP + diphosphate + H(+). The chain is Phenylalanine--tRNA ligase alpha subunit from Xanthomonas axonopodis pv. citri (strain 306).